Here is a 450-residue protein sequence, read N- to C-terminus: UDP-N-acetylmuramoylalanine--D-glutamate ligase (450 aa).

Position 119–125 (Gly-119–Thr-125) interacts with ATP.

The protein belongs to the MurCDEF family.

Its subcellular location is the cytoplasm. The catalysed reaction is UDP-N-acetyl-alpha-D-muramoyl-L-alanine + D-glutamate + ATP = UDP-N-acetyl-alpha-D-muramoyl-L-alanyl-D-glutamate + ADP + phosphate + H(+). The protein operates within cell wall biogenesis; peptidoglycan biosynthesis. In terms of biological role, cell wall formation. Catalyzes the addition of glutamate to the nucleotide precursor UDP-N-acetylmuramoyl-L-alanine (UMA). This is UDP-N-acetylmuramoylalanine--D-glutamate ligase from Streptococcus pneumoniae (strain Hungary19A-6).